The chain runs to 2919 residues: RNA-directed RNA polymerase L (2919 aa).

Positions 86 to 675 (SLMKQLDPND…DNDINLDSAT (590 aa)) are endonuclease. The Mn(2+) site is built by histidine 535, aspartate 567, and glutamate 585. The For endonuclease activity role is filled by lysine 604. The 200-residue stretch at 1472–1671 (ARKTLKNEYM…SWFRKKEKLG (200 aa)) folds into the RdRp catalytic domain. Aspartate 1636 contacts Mg(2+). The cap-binding stretch occupies residues 2494-2632 (RVGKLGILGS…PLYWNPSLST (139 aa)).

It belongs to the Bunyavirales RNA polymerase family. Homomultimer. Interacts with glycoprotein N; this interaction allows efficient polymerase packaging into virus particles. Interacts with nucleoprotein N. Mn(2+) serves as cofactor. Requires Mg(2+) as cofactor.

Its subcellular location is the host Golgi apparatus. The protein localises to the host endoplasmic reticulum. The protein resides in the host endoplasmic reticulum-Golgi intermediate compartment. It is found in the virion. The enzyme catalyses RNA(n) + a ribonucleoside 5'-triphosphate = RNA(n+1) + diphosphate. Its function is as follows. RNA-dependent RNA polymerase, which is responsible for the replication and transcription of the viral RNA genome using antigenomic RNA as an intermediate. During transcription, synthesizes subgenomic RNAs and assures their capping by a cap-snatching mechanism, which involves the endonuclease activity cleaving the host capped pre-mRNAs. These short capped RNAs are then used as primers for viral transcription. The 3'-end of subgenomic mRNAs molecules are not polyadenylated. During replication, the polymerase binds the 5' and 3' vRNA extremities at distinct sites. In turn, significant conformational changes occur in the polymerase and in vRNA to initiate active RNA synthesis. As a consequence of the use of the same enzyme for both transcription and replication, these mechanisms need to be well coordinated. The sequence is that of RNA-directed RNA polymerase L from Avena sativa (Oat).